The sequence spans 299 residues: Bifunctional protein FolD (299 aa).

Residues 169–171 (GRS), Ser194, and Ile235 contribute to the NADP(+) site.

This sequence belongs to the tetrahydrofolate dehydrogenase/cyclohydrolase family. As to quaternary structure, homodimer.

It catalyses the reaction (6R)-5,10-methylene-5,6,7,8-tetrahydrofolate + NADP(+) = (6R)-5,10-methenyltetrahydrofolate + NADPH. The enzyme catalyses (6R)-5,10-methenyltetrahydrofolate + H2O = (6R)-10-formyltetrahydrofolate + H(+). It functions in the pathway one-carbon metabolism; tetrahydrofolate interconversion. In terms of biological role, catalyzes the oxidation of 5,10-methylenetetrahydrofolate to 5,10-methenyltetrahydrofolate and then the hydrolysis of 5,10-methenyltetrahydrofolate to 10-formyltetrahydrofolate. The sequence is that of Bifunctional protein FolD from Nostoc sp. (strain PCC 7120 / SAG 25.82 / UTEX 2576).